Consider the following 467-residue polypeptide: MSSILPFTPPVVKRLLGWKKSAGGSGGAGGGEQNGQEEKWCEKAVKSLVKKLKKTGRLDELEKAITTQNCNTKCVTIPSTCSEIWGLSTPNTIDQWDTTGLYSFSEQTRSLDGRLQVSHRKGLPHVIYCRLWRWPDLHSHHELKAIENCEYAFNLKKDEVCVNPYHYQRVETPVLPPVLVPRHTEILTELPPLDDYTHSIPENTNFPAGIEPQSNYIPETPPPGYISEDGETSDQQLNQSMDTGSPAELSPTTLSPVNHSLDLQPVTYSEPAFWCSIAYYELNQRVGETFHASQPSLTVDGFTDPSNSERFCLGLLSNVNRNATVEMTRRHIGRGVRLYYIGGEVFAECLSDSAIFVQSPNCNQRYGWHPATVCKIPPGCNLKIFNNQGFAALLAQSVNQGFEAVYQLTRMCTIRMSFVKGWGAEYRRQTVTSTPCWIELHLNGPLQWLDKVLTQMGSPSVRCSSMS.

Position 2 is an N-acetylserine (Ser2). Residue Thr8 is modified to Phosphothreonine. The 167-residue stretch at Pro10 to Pro176 folds into the MH1 domain. Residue Lys19 is modified to N6-acetyllysine. Residues Cys74, Cys149, Cys161, and His166 each contribute to the Zn(2+) site. Positions Pro207–Ile217 are enriched in polar residues. The disordered stretch occupies residues Pro207 to Pro251. Thr220 bears the Phosphothreonine mark. The PY-motif signature appears at Pro221 to Tyr225. Over residues Ser233–Thr243 the composition is skewed to polar residues. Ser240 carries the phosphoserine; by CAMK2 modification. Phosphoserine is present on residues Ser245, Ser250, Ser255, Ser458, Ser460, and Ser464. One can recognise an MH2 domain in the interval Trp274–Ser467. Ser465 and Ser467 each carry phosphoserine; by TGFBR1.

The protein belongs to the dwarfin/SMAD family. As to quaternary structure, monomer; in the absence of TGF-beta. Heterodimer; in the presence of TGF-beta. Forms a heterodimer with co-SMAD, SMAD4, in the nucleus to form the transactivation complex SMAD2/SMAD4. Found in a complex with SMAD3 and TRIM33 upon addition of TGF-beta. Identified in a complex that contains at least ZNF451, SMAD2, SMAD3 and SMAD4. Interacts (via the MH2 domain) with ZFYVE9; may form trimers with the SMAD4 co-SMAD. Interacts with TAZ/WWRT1. Interacts with FOXH1. Interacts with SNW1. Interacts with CREB-binding protein (CBP) and EP300. Interacts with SNON. Interacts with ALK4/ACVR1B. Interacts with SKOR1. Interacts with SKOR2. Interacts with PRDM16. Interacts (via MH2 domain) with LEMD3. Interacts with RBPMS. Interacts with WWP1. Interacts (dephosphorylated form, via the MH1 and MH2 domains) with RANBP3 (via its C-terminal R domain); the interaction results in the export of dephosphorylated SMAD3 out of the nucleus and termination of the TGF-beta signaling. Interacts with PDPK1 (via PH domain). Interacts with DAB2; the interactions are enhanced upon TGF-beta stimulation. Interacts with USP15. Interacts with PPP5C. Interacts with LDLRAD4 (via the SMAD interaction motif). Interacts (via MH2 domain) with PMEPA1 (via the SMAD interaction motif). Interacts with ZFHX3. Interacts with ZNF451. Interacts with SMURF2 when phosphorylated on Ser-465/467. Interacts with PPM1A. Interacts with TGF-beta. Interacts with TGFBR1. Interacts with TGIF. Interacts with SMAD3 and TRIM33. Interacts with ZNF580. Interacts with NEDD4L in response to TGF-beta. Interacts with HGS. Interacts with AIP1. Interacts with WWP1. Interacts with PML. Interacts weakly with ZNF8. Interacts (when phosphorylated) with RNF111; RNF111 acts as an enhancer of the transcriptional responses by mediating ubiquitination and degradation of SMAD2 inhibitors. Interacts with YAP1 (when phosphorylated at 'Ser-55'). Interacts when phosphorylated with IPO7; the interaction facilitates translocation of SMAD2 to the nucleus. Interacts with MTMR4; negatively regulates TGF-beta signaling through SMAD2 dephosphorylation and retention in endosomes. In response to TGF-beta, phosphorylated on the C-terminal SXS motif by TGF-beta and activin type 1 receptor kinases, phosphorylation declines progressively in a KMT5A-dependent manner. Phosphorylation in this motif is required for interaction with a number of proteins including SMURF2, SNON and SMAD4 in response to TGF-beta. Dephosphorylated in this motif by PPM1A leading to disruption of the SMAD2/3-SMAD4 complex, nuclear export and termination of the TGF-beta signaling. In response to decorin, the naturally occurring inhibitor of TGF-beta signaling, phosphorylated on Ser-240 by CaMK2. Phosphorylated by MAPK3 upon EGF stimulation; which increases transcriptional activity and stability, and is blocked by calmodulin. Phosphorylated by PDPK1. In terms of processing, acetylated on Lys-19 by coactivators in response to TGF-beta signaling, which increases transcriptional activity. Post-translationally, in response to TGF-beta, ubiquitinated by NEDD4L; which promotes its degradation. Monoubiquitinated, leading to prevent DNA-binding. Deubiquitination by USP15 alleviates inhibition and promotes activation of TGF-beta target genes. Ubiquitinated by RNF111, leading to its degradation: only SMAD2 proteins that are 'in use' are targeted by RNF111, RNF111 playing a key role in activating SMAD2 and regulating its turnover.

The protein resides in the cytoplasm. The protein localises to the nucleus. Its function is as follows. Receptor-regulated SMAD (R-SMAD) that is an intracellular signal transducer and transcriptional modulator activated by TGF-beta (transforming growth factor) and activin type 1 receptor kinases. Binds the TRE element in the promoter region of many genes that are regulated by TGF-beta and, on formation of the SMAD2/SMAD4 complex, activates transcription. Promotes TGFB1-mediated transcription of odontoblastic differentiation genes in dental papilla cells. Positively regulates PDPK1 kinase activity by stimulating its dissociation from the 14-3-3 protein YWHAQ which acts as a negative regulator. This Bos taurus (Bovine) protein is Mothers against decapentaplegic homolog 2 (SMAD2).